A 206-amino-acid chain; its full sequence is MTAMQPGTRVGRVERTTRESSVLVELDLDGTGQVDIDTTVPFYDHMLTALGTHAAFDLKVKSSGDVHIDAHHTVEDTAIVFGQALRQALGGKLGIRRFGDAWIPMDETLAHAAVDVSGRSYCVMTGEPEQYNSFTIGGNYPFVLNRHVFESIAFHSQINLHVRVIHGRDPHHIAEAQYKAIARALRAAVEPDPRFSGVVPSTKGAL.

The protein belongs to the imidazoleglycerol-phosphate dehydratase family.

It is found in the cytoplasm. It carries out the reaction D-erythro-1-(imidazol-4-yl)glycerol 3-phosphate = 3-(imidazol-4-yl)-2-oxopropyl phosphate + H2O. It functions in the pathway amino-acid biosynthesis; L-histidine biosynthesis; L-histidine from 5-phospho-alpha-D-ribose 1-diphosphate: step 6/9. This Saccharopolyspora erythraea (strain ATCC 11635 / DSM 40517 / JCM 4748 / NBRC 13426 / NCIMB 8594 / NRRL 2338) protein is Imidazoleglycerol-phosphate dehydratase.